Reading from the N-terminus, the 829-residue chain is Isethionate sulfite-lyase (829 aa).

The 669-residue stretch at Glu-31–Leu-699 folds into the PFL domain. 2-hydroxyethane-1-sulfonate contacts are provided by residues Arg-188, Gln-192, Cys-467–Glu-469, and Arg-677. Residue Cys-467 is the Cysteine radical intermediate of the active site. Glu-469 functions as the Proton acceptor in the catalytic mechanism. Residues Asp-706 to Met-829 form the Glycine radical domain. Residue Gly-804 is modified to Glycine radical.

This sequence belongs to the glycyl radical enzyme (GRE) family. In terms of assembly, homodimer. Post-translationally, requires the activating protein IslB to generate the key active site glycyl radical on Gly-804 that is involved in catalysis.

The enzyme catalyses 2-hydroxyethane-1-sulfonate = acetaldehyde + sulfite + H(+). It participates in organosulfur degradation; alkanesulfonate degradation. Involved in an anaerobic respiration pathway that converts the sulfonate isethionate (2-hydroxyethanesulfonate) to ammonia, acetate and sulfide. Catalyzes the radical-mediated C-S bond cleavage of isethionate (2-hydroxyethanesulfonate) to form sulfite and acetaldehyde. This is Isethionate sulfite-lyase from Oleidesulfovibrio alaskensis (strain ATCC BAA-1058 / DSM 17464 / G20) (Desulfovibrio alaskensis).